The chain runs to 128 residues: Small ribosomal subunit protein uS12 (128 aa).

Residues 1–29 (MPTINQLIRKGREPKERKSKSPALMGNPQ) form a disordered region. The residue at position 89 (Asp89) is a 3-methylthioaspartic acid. The disordered stretch occupies residues 106 to 128 (GVEGRRQGRSKYGAKRPKEGGKK).

The protein belongs to the universal ribosomal protein uS12 family. As to quaternary structure, part of the 30S ribosomal subunit. Contacts proteins S8 and S17. May interact with IF1 in the 30S initiation complex.

With S4 and S5 plays an important role in translational accuracy. In terms of biological role, interacts with and stabilizes bases of the 16S rRNA that are involved in tRNA selection in the A site and with the mRNA backbone. Located at the interface of the 30S and 50S subunits, it traverses the body of the 30S subunit contacting proteins on the other side and probably holding the rRNA structure together. The combined cluster of proteins S8, S12 and S17 appears to hold together the shoulder and platform of the 30S subunit. The protein is Small ribosomal subunit protein uS12 of Dictyoglomus turgidum (strain DSM 6724 / Z-1310).